The sequence spans 494 residues: Tyrosinase (494 aa).

6 residues coordinate Cu cation: His-38, His-53, Cys-64, His-224, His-228, and His-256.

The protein belongs to the tyrosinase family. The cofactor is Cu(2+).

It catalyses the reaction 2 L-dopa + O2 = 2 L-dopaquinone + 2 H2O. It carries out the reaction L-tyrosine + O2 = L-dopaquinone + H2O. The sequence is that of Tyrosinase (mepA) from Rhizobium meliloti (Ensifer meliloti).